The chain runs to 224 residues: MAAAVPQRAWTVEQLRSEQLPKKDIIKFLQDHGSDSFLAEHKLLGNIKNVAKTANKDHLVTAYNHLFESKRFKGTESISKVSEQVKNVKLNEDKPKETKSEETLDEGPPKYTKSVLKKGDKTNFPKKGDVVHCWYTGTLQDGTVFDTNIQTSSKKKKNAKPLSFKVGIGKVIRGWDEALLTMSKGEKARLEIEPEWAYGKKGQPDAKIPPNAKLIFEVELVDID.

An N-acetylalanine modification is found at Ala2. Ser36 is subject to Phosphoserine. The segment covering Lys89–Glu102 has biased composition (basic and acidic residues). Positions Lys89–Lys113 are disordered. At Lys99 the chain carries N6-acetyllysine. Residues Gly128 to Asp224 form the PPIase FKBP-type domain. Residue Ser152 is modified to Phosphoserine. The residue at position 170 (Lys170) is an N6-acetyllysine.

This sequence belongs to the FKBP-type PPIase family.

The protein resides in the nucleus. It carries out the reaction [protein]-peptidylproline (omega=180) = [protein]-peptidylproline (omega=0). Its activity is regulated as follows. Inhibited preferentially by rapamycin over FK506. Its function is as follows. FK506- and rapamycin-binding proteins (FKBPs) constitute a family of receptors for the two immunosuppressants which inhibit T-cell proliferation by arresting two dinstinct cytoplasmic signal transmission pathways. PPIases accelerate the folding of proteins. In Bos taurus (Bovine), this protein is Peptidyl-prolyl cis-trans isomerase FKBP3 (FKBP3).